Reading from the N-terminus, the 336-residue chain is Holliday junction branch migration complex subunit RuvB (336 aa).

A large ATPase domain (RuvB-L) region spans residues 1–182 (MKERIVNLET…FGMSFRMQFY (182 aa)). ATP is bound by residues Leu-21, Arg-22, Gly-63, Lys-66, Thr-67, Ser-68, 129-131 (EDF), Arg-172, Tyr-182, and Arg-219. Thr-67 lines the Mg(2+) pocket. Positions 183–253 (SPSELSLIIK…ITLHALNELG (71 aa)) are small ATPAse domain (RuvB-S). Positions 256-336 (ELGFDEADLA…IPTLNPQTLF (81 aa)) are head domain (RuvB-H). DNA-binding residues include Arg-310 and Arg-315.

Belongs to the RuvB family. Homohexamer. Forms an RuvA(8)-RuvB(12)-Holliday junction (HJ) complex. HJ DNA is sandwiched between 2 RuvA tetramers; dsDNA enters through RuvA and exits via RuvB. An RuvB hexamer assembles on each DNA strand where it exits the tetramer. Each RuvB hexamer is contacted by two RuvA subunits (via domain III) on 2 adjacent RuvB subunits; this complex drives branch migration. In the full resolvosome a probable DNA-RuvA(4)-RuvB(12)-RuvC(2) complex forms which resolves the HJ.

The protein localises to the cytoplasm. The catalysed reaction is ATP + H2O = ADP + phosphate + H(+). The RuvA-RuvB-RuvC complex processes Holliday junction (HJ) DNA during genetic recombination and DNA repair, while the RuvA-RuvB complex plays an important role in the rescue of blocked DNA replication forks via replication fork reversal (RFR). RuvA specifically binds to HJ cruciform DNA, conferring on it an open structure. The RuvB hexamer acts as an ATP-dependent pump, pulling dsDNA into and through the RuvAB complex. RuvB forms 2 homohexamers on either side of HJ DNA bound by 1 or 2 RuvA tetramers; 4 subunits per hexamer contact DNA at a time. Coordinated motions by a converter formed by DNA-disengaged RuvB subunits stimulates ATP hydrolysis and nucleotide exchange. Immobilization of the converter enables RuvB to convert the ATP-contained energy into a lever motion, pulling 2 nucleotides of DNA out of the RuvA tetramer per ATP hydrolyzed, thus driving DNA branch migration. The RuvB motors rotate together with the DNA substrate, which together with the progressing nucleotide cycle form the mechanistic basis for DNA recombination by continuous HJ branch migration. Branch migration allows RuvC to scan DNA until it finds its consensus sequence, where it cleaves and resolves cruciform DNA. The sequence is that of Holliday junction branch migration complex subunit RuvB from Helicobacter pylori (strain J99 / ATCC 700824) (Campylobacter pylori J99).